The primary structure comprises 269 residues: 4-hydroxy-tetrahydrodipicolinate reductase (269 aa).

9 to 14 (GVAGRM) contacts NAD(+). NADP(+) is bound at residue R36. Residues 99–101 (GTT) and 123–126 (APNM) contribute to the NAD(+) site. H156 functions as the Proton donor/acceptor in the catalytic mechanism. Residue H157 participates in (S)-2,3,4,5-tetrahydrodipicolinate binding. Residue K160 is the Proton donor of the active site. (S)-2,3,4,5-tetrahydrodipicolinate is bound at residue 166–167 (GT).

It belongs to the DapB family.

The protein localises to the cytoplasm. It catalyses the reaction (S)-2,3,4,5-tetrahydrodipicolinate + NAD(+) + H2O = (2S,4S)-4-hydroxy-2,3,4,5-tetrahydrodipicolinate + NADH + H(+). The catalysed reaction is (S)-2,3,4,5-tetrahydrodipicolinate + NADP(+) + H2O = (2S,4S)-4-hydroxy-2,3,4,5-tetrahydrodipicolinate + NADPH + H(+). Its pathway is amino-acid biosynthesis; L-lysine biosynthesis via DAP pathway; (S)-tetrahydrodipicolinate from L-aspartate: step 4/4. Functionally, catalyzes the conversion of 4-hydroxy-tetrahydrodipicolinate (HTPA) to tetrahydrodipicolinate. The sequence is that of 4-hydroxy-tetrahydrodipicolinate reductase from Methylococcus capsulatus (strain ATCC 33009 / NCIMB 11132 / Bath).